The following is a 380-amino-acid chain: Carbonic anhydrase 2 (380 aa).

An N-terminal signal peptide occupies residues 1 to 20; sequence MARTGALLLAALALAGCAQA. One can recognise an Alpha-carbonic anhydrase domain in the interval 38-322; sequence DHWDHSLNGE…HHHRRLLHNH (285 aa). Intrachain disulfides connect cysteine 61–cysteine 264, cysteine 194–cysteine 198, and cysteine 296–cysteine 354. Residue asparagine 101 is glycosylated (N-linked (GlcNAc...) asparagine). Residue histidine 112 is the Proton acceptor of the active site. Asparagine 135 is a glycosylation site (N-linked (GlcNAc...) asparagine). 3 residues coordinate Zn(2+): histidine 163, histidine 165, and histidine 182. 260–261 is a binding site for substrate; it reads TT. An N-linked (GlcNAc...) asparagine glycan is attached at asparagine 297.

The protein belongs to the alpha-carbonic anhydrase family. In terms of assembly, tetramer of two large and two small subunits linked by two disulfide bonds. Requires Zn(2+) as cofactor.

Its subcellular location is the periplasm. The catalysed reaction is hydrogencarbonate + H(+) = CO2 + H2O. Its function is as follows. Reversible hydration of carbon dioxide. This Chlamydomonas reinhardtii (Chlamydomonas smithii) protein is Carbonic anhydrase 2 (CAH2).